We begin with the raw amino-acid sequence, 290 residues long: ATP synthase gamma chain (290 aa).

The protein belongs to the ATPase gamma chain family. F-type ATPases have 2 components, CF(1) - the catalytic core - and CF(0) - the membrane proton channel. CF(1) has five subunits: alpha(3), beta(3), gamma(1), delta(1), epsilon(1). CF(0) has three main subunits: a, b and c.

The protein localises to the cell inner membrane. Its function is as follows. Produces ATP from ADP in the presence of a proton gradient across the membrane. The gamma chain is believed to be important in regulating ATPase activity and the flow of protons through the CF(0) complex. The chain is ATP synthase gamma chain from Desulfotalea psychrophila (strain LSv54 / DSM 12343).